A 211-amino-acid chain; its full sequence is Glycerol-3-phosphate acyltransferase (211 aa).

The next 4 membrane-spanning stretches (helical) occupy residues 5–25, 80–100, 112–132, and 138–158; these read ALGMMLIAYLCGSISSAILFC, PLYLGLTAIAACLGHIYPVFF, FGAIAPIGWDLTGLMTGTWLL, and GYSSLGAIVSALIAPFYVWWF.

The protein belongs to the PlsY family. As to quaternary structure, probably interacts with PlsX.

Its subcellular location is the cell inner membrane. The enzyme catalyses an acyl phosphate + sn-glycerol 3-phosphate = a 1-acyl-sn-glycero-3-phosphate + phosphate. The protein operates within lipid metabolism; phospholipid metabolism. Functionally, catalyzes the transfer of an acyl group from acyl-phosphate (acyl-PO(4)) to glycerol-3-phosphate (G3P) to form lysophosphatidic acid (LPA). This enzyme utilizes acyl-phosphate as fatty acyl donor, but not acyl-CoA or acyl-ACP. The chain is Glycerol-3-phosphate acyltransferase from Pectobacterium carotovorum subsp. carotovorum (strain PC1).